The following is a 244-amino-acid chain: MRMKRFLTIVQILLVVIIIIFGYKIVQTYIEDKQERANYEKLQQKFQMLMSKHQEHVRPQFESLEKINKDIVGWIKLSGTSLNYPVLQGKTNHDYLNLDFEREHRRKGSIFMDFRNELKNLNHNTILYGHHVGDNTMFDVLEDYLKQSFYEKHKIIEFDNKYGKYQLQVFSAYKTTTKDNYIRTDFENDQDYQQFLDETKRKSVINSDVNVTVKDRIMTLSTCEDAYSETTKRIVVVAKIIKVS.

Residues 1–6 are Cytoplasmic-facing; sequence MRMKRF. The chain crosses the membrane as a helical span at residues 7-24; the sequence is LTIVQILLVVIIIIFGYK. Residues 25–244 lie on the Extracellular side of the membrane; it reads IVQTYIEDKQ…VVVAKIIKVS (220 aa). Cys-223 functions as the Acyl-thioester intermediate in the catalytic mechanism.

This sequence belongs to the bacterial sortase family. Class B subfamily.

The protein resides in the cell membrane. It carries out the reaction The enzyme catalyzes a cell wall sorting reaction in which a surface protein with a sorting signal containing a NPXTN motif is cleaved between the Thr and Asn residue. The resulting threonine carboxyl end of the protein is covalently attached to a pentaglycine cross-bridge of peptidoglycan.. Its activity is regulated as follows. Inhibited by MTSET (2-(Trimethylammonium)-ethyl-methanethiosulfonate) and E64 ([n- (l-3-trans-carboxyoxirane-2-carbonyl)-l-leucyl]-amido(4-guanido)butane). Inhibited by coptisine. Transpeptidase that anchors surface proteins to the cell wall. Recognizes and modifies its substrate by proteolytic cleavage of a C-terminal sorting signal. Following cleavage, a covalent intermediate is formed via a thioester bond between the sortase and its substrate, which is then transferred and covalently attached to the cell wall. This sortase recognizes an Asn-Pro-Gln-Thr-Asn (NPQTN) motif in IsdC, which is cleaved by the sortase between the threonine and aspargine residues; may only have 1 substrate in this bacterium. May be dedicated to the process of iron acquisition during bacterial infection. The polypeptide is Sortase B (Staphylococcus aureus (strain NCTC 8325 / PS 47)).